A 116-amino-acid polypeptide reads, in one-letter code: Large ribosomal subunit protein bL17 (116 aa).

The protein belongs to the bacterial ribosomal protein bL17 family. As to quaternary structure, part of the 50S ribosomal subunit. Contacts protein L32.

This Prochlorococcus marinus (strain MIT 9303) protein is Large ribosomal subunit protein bL17.